A 364-amino-acid chain; its full sequence is Acetylserotonin O-methyltransferase 1 (364 aa).

S-adenosyl-L-homocysteine-binding residues include Gly208, Asp231, Asp251, and Lys265. His269 acts as the Proton acceptor in catalysis. Catalysis depends on residues Glu300 and Glu330.

This sequence belongs to the class I-like SAM-binding methyltransferase superfamily. Cation-independent O-methyltransferase family. In terms of assembly, homodimer. In terms of tissue distribution, expressed in leaves, stems and flowers.

It localises to the cytoplasm. It carries out the reaction N-acetylserotonin + S-adenosyl-L-methionine = melatonin + S-adenosyl-L-homocysteine + H(+). Its pathway is aromatic compound metabolism; melatonin biosynthesis; melatonin from serotonin: step 1/2. Its function is as follows. Methyltransferase which catalyzes the transfer of a methyl group onto N-acetylserotonin, producing melatonin (N-acetyl-5-methoxytryptamine). This is Acetylserotonin O-methyltransferase 1 from Oryza sativa subsp. japonica (Rice).